The sequence spans 117 residues: Minor capsid protein p17 (117 aa).

N-linked (GlcNAc...) asparagine; by host glycosylation is present at asparagine 12. Residues 39–59 (AILLGILILLVIILIIVAIVY) form a helical membrane-spanning segment. A disordered region spans residues 96-117 (KNSTSQQSHIPSDEQLAELAHS). An N-linked (GlcNAc...) asparagine; by host glycan is attached at asparagine 97.

It belongs to the asfivirus minor capsid protein p17 family. Interacts with the minor capsid protein M1249L and with the hexon capsid protein p72 capsomers; these interactions form a rigid zipper structure that stabilizes the capsomers. Interacts with host STING1.

The protein resides in the virion membrane. It localises to the host endoplasmic reticulum membrane. Functionally, together with the penton and the other minor capsid proteins (M1249L, p49), forms a complicated network immediately below the outer capsid shell, stabilizing the whole capsid. Three copies of p17 encircle each p72 capsomer in the inner capsid shell, anchoring p72 capsomers on the inner membrane. Required for the assembly of the capsid and icosahedral morphogenesis. Additionally, inhibits the host cGAS-STING pathway through its interaction with STING1 and subsequent interference of the recruitment of downstream components TBK1 and IKBKE. The polypeptide is Minor capsid protein p17 (African swine fever virus (isolate Warthog/Namibia/Wart80/1980) (ASFV)).